We begin with the raw amino-acid sequence, 340 residues long: Adenosine kinase (340 aa).

Residue D293 is part of the active site.

It belongs to the carbohydrate kinase PfkB family. Monomer. Requires Mg(2+) as cofactor.

It carries out the reaction adenosine + ATP = AMP + ADP + H(+). It functions in the pathway purine metabolism; AMP biosynthesis via salvage pathway; AMP from adenosine: step 1/1. ATP dependent phosphorylation of adenosine and other related nucleoside analogs to monophosphate derivatives. This is Adenosine kinase (adk) from Dictyostelium discoideum (Social amoeba).